A 108-amino-acid chain; its full sequence is UPF0102 protein Shewana3_3881 (108 aa).

This sequence belongs to the UPF0102 family.

The polypeptide is UPF0102 protein Shewana3_3881 (Shewanella sp. (strain ANA-3)).